Here is a 442-residue protein sequence, read N- to C-terminus: D(2) dopamine receptor A (442 aa).

Residues 1-31 lie on the Extracellular side of the membrane; that stretch reads MDPQNLSMYNDDINNGTNGTAVDQKPHYNYY. N-linked (GlcNAc...) asparagine glycosylation is found at asparagine 5, asparagine 15, and asparagine 18. A helical transmembrane segment spans residues 32-54; the sequence is AMLLTLLVFVIVFGNVLVCIAVS. Topologically, residues 55 to 64 are cytoplasmic; sequence REKALQTTTN. The helical transmembrane segment at 65 to 87 threads the bilayer; sequence YLIVSLAVADLLVATLVMPWAVY. Residues 88-102 lie on the Extracellular side of the membrane; that stretch reads MEVVGEWRFSRIHCD. A disulfide bridge connects residues cysteine 101 and cysteine 176. The helical transmembrane segment at 103–124 threads the bilayer; that stretch reads IFVTLDVMMCTASILNLCAISI. Residues 125-145 are Cytoplasmic-facing; it reads DRYTAVAMPMLYNTRYSSKRR. A helical membrane pass occupies residues 146–166; that stretch reads VTVMISVVWVLSFAISCPLLF. Residues 167–182 are Extracellular-facing; that stretch reads GLNNTGSKVCIIDNPA. The chain crosses the membrane as a helical span at residues 183–207; that stretch reads FVIYSSIVSFYVPFIVTLLVYVQIY. Residues 208-372 are Cytoplasmic-facing; the sequence is IVLRKRRKRV…SQHKEKKATQ (165 aa). Positions 273 to 335 are disordered; sequence DMEMEMMSST…KNGHPKDSTK (63 aa). Residues 304–318 are compositionally biased toward polar residues; the sequence is ATSNQCKNASLTSPV. The span at 322–335 shows a compositional bias: basic and acidic residues; that stretch reads YKAEKNGHPKDSTK. Residues 373-394 traverse the membrane as a helical segment; sequence MLAIVLGVFIICWLPFFIIHIL. At 395-408 the chain is on the extracellular side; the sequence is NMHCNCNIPQALYS. A disulfide bridge connects residues cysteine 398 and cysteine 400. Residues 409 to 430 form a helical membrane-spanning segment; it reads AFTWLGYVNSAVNPIIYTTFNV. At 431-442 the chain is on the cytoplasmic side; it reads EFRKAFIKILHC. The S-palmitoyl cysteine moiety is linked to residue cysteine 442.

This sequence belongs to the G-protein coupled receptor 1 family. Palmitoylated. Palmitoylation is probably required for proper localization to the plasma membrane and stability of the receptor. As to expression, brain; pituitary.

Its subcellular location is the cell membrane. It is found in the golgi apparatus membrane. Functionally, this is one of the five types (D1 to D5) of receptors for dopamine. The activity of this receptor is mediated by G proteins which inhibits adenylyl cyclase. In Xenopus D2R is involved in the regulation of the melanotrope cells of the intermediate pituitary during background adaptation of the animal. The protein is D(2) dopamine receptor A (drd2-a) of Xenopus laevis (African clawed frog).